The primary structure comprises 193 residues: Segregation and condensation protein B (193 aa).

It belongs to the ScpB family. Homodimer. Homodimerization may be required to stabilize the binding of ScpA to the Smc head domains. Component of a cohesin-like complex composed of ScpA, ScpB and the Smc homodimer, in which ScpA and ScpB bind to the head domain of Smc. The presence of the three proteins is required for the association of the complex with DNA.

Its subcellular location is the cytoplasm. In terms of biological role, participates in chromosomal partition during cell division. May act via the formation of a condensin-like complex containing Smc and ScpA that pull DNA away from mid-cell into both cell halves. This Clostridium botulinum (strain Kyoto / Type A2) protein is Segregation and condensation protein B.